Consider the following 449-residue polypeptide: Heterogeneous nuclear ribonucleoprotein H2 (449 aa).

Residue methionine 1 is modified to N-acetylmethionine. Methionine 2 carries the post-translational modification N-acetylmethionine; in Heterogeneous nuclear ribonucleoprotein H2, N-terminally processed. The RRM 1 domain maps to 11 to 90 (FVVKVRGLPW…RYVEVFKSNS (80 aa)). Serine 23 bears the Phosphoserine mark. Residue lysine 35 forms a Glycyl lysine isopeptide (Lys-Gly) (interchain with G-Cter in SUMO2) linkage. Phosphoserine occurs at positions 54 and 63. Lysine 87 participates in a covalent cross-link: Glycyl lysine isopeptide (Lys-Gly) (interchain with G-Cter in SUMO2). Serine 90 is subject to Phosphoserine. Residue lysine 98 forms a Glycyl lysine isopeptide (Lys-Gly) (interchain with G-Cter in SUMO2) linkage. The region spanning 111-188 (GFVRLRGLPF…RYIEIFKSSR (78 aa)) is the RRM 2 domain. At arginine 233 the chain carries Dimethylated arginine; alternate. Arginine 233 bears the Omega-N-methylarginine; alternate mark. Residues 234–249 (GAYGGGYGGYDDYGGY) form a 1-1 repeat. The interval 234-433 (GAYGGGYGGY…YGGQSSMSGY (200 aa)) is 2 X 16 AA Gly-rich approximate repeats. Residue tyrosine 246 is modified to Phosphotyrosine. Residues 289 to 364 (HCVHMRGLPY…RYVELFLNST (76 aa)) enclose the RRM 3 domain. Residue serine 310 is modified to Phosphoserine. 3 consecutive repeat copies span residues 354–372 (HRYVELFLNSTAGTSGGAY), 374–392 (HSYVELFLNSTAGASGGAY), and 418–433 (AGYGGGYGGQSSMSGY). Residues 354 to 392 (HRYVELFLNSTAGTSGGAYDHSYVELFLNSTAGASGGAY) form a 2 X 19 AA perfect repeats region.

As to quaternary structure, component of a ribonucleoprotein complex containing mRNAs and RNA-binding proteins including DDX5, HNRNPH2 and SRSF1 as well as splicing regulator ARVCF. Interacts with TXNL4/DIM1.

The protein localises to the nucleus. Its subcellular location is the nucleoplasm. This protein is a component of the heterogeneous nuclear ribonucleoprotein (hnRNP) complexes which provide the substrate for the processing events that pre-mRNAs undergo before becoming functional, translatable mRNAs in the cytoplasm. Binds poly(RG). This Rattus norvegicus (Rat) protein is Heterogeneous nuclear ribonucleoprotein H2 (Hnrnph2).